The chain runs to 351 residues: Transmembrane and coiled-coil domain-containing protein 5B (351 aa).

A coiled-coil region spans residues 17–214; that stretch reads EIPKLEITKQ…WRSSIQSAKT (198 aa). Residues 292 to 312 form a helical membrane-spanning segment; sequence IFVVMIFFRLLGYVLFYLQYI.

The protein belongs to the TMCO5 family.

It localises to the membrane. The chain is Transmembrane and coiled-coil domain-containing protein 5B (TMCO5B) from Bos taurus (Bovine).